The sequence spans 588 residues: Adenine deaminase (588 aa).

The protein belongs to the metallo-dependent hydrolases superfamily. Adenine deaminase family. Homodimer. Mn(2+) is required as a cofactor.

It catalyses the reaction adenine + H2O + H(+) = hypoxanthine + NH4(+). The sequence is that of Adenine deaminase from Escherichia coli (strain SMS-3-5 / SECEC).